Here is a 441-residue protein sequence, read N- to C-terminus: Tol-Pal system protein TolB (441 aa).

An N-terminal signal peptide occupies residues 1-25 (MRIFFFAYVLPTVISLLLGCQGAIA).

The protein belongs to the TolB family. The Tol-Pal system is composed of five core proteins: the inner membrane proteins TolA, TolQ and TolR, the periplasmic protein TolB and the outer membrane protein Pal. They form a network linking the inner and outer membranes and the peptidoglycan layer.

It is found in the periplasm. In terms of biological role, part of the Tol-Pal system, which plays a role in outer membrane invagination during cell division and is important for maintaining outer membrane integrity. This is Tol-Pal system protein TolB from Anaplasma marginale (strain St. Maries).